We begin with the raw amino-acid sequence, 326 residues long: uncharacterized protein (326 aa).

An S4 RNA-binding domain is found at 15–76; the sequence is VRIEKFCLKL…IEPYLHNHSE (62 aa). Residue D147 is part of the active site.

This sequence belongs to the pseudouridine synthase RluA family.

The catalysed reaction is a uridine in RNA = a pseudouridine in RNA. This is an uncharacterized protein from Mycoplasma pneumoniae (strain ATCC 29342 / M129 / Subtype 1) (Mycoplasmoides pneumoniae).